An 877-amino-acid chain; its full sequence is GTPase activating protein homolog 2 (877 aa).

One can recognise an F-BAR domain in the interval 14–285; it reads FKFTDNLWDG…SVEMIDITND (272 aa). The stretch at 130 to 214 forms a coiled coil; sequence QEGIKLKQDM…SNCDEEYREQ (85 aa). Positions 374–560 constitute a Rho-GAP domain; that stretch reads VSLDELMNRQ…TLIKQIPPPL (187 aa). 3 disordered regions span residues 589-612, 644-704, and 749-800; these read DQLS…GSGS, LPPL…AEPT, and AATP…LAST. Composition is skewed to low complexity over residues 593–612, 653–676, and 749–779; these read NDDN…GSGS, SGSG…SPTT, and AATP…STST. Positions 780-800 are enriched in polar residues; the sequence is IKTSSPDRTTPLTSSPPLAST.

It localises to the cytoplasm. Its subcellular location is the contractile vacuole. Its function is as follows. Rho GTPase-activating protein involved in the signal transduction pathway. Regulator of the contractile vacuole network as well as involved in driving vacuole emptying. This chain is GTPase activating protein homolog 2 (mgp2), found in Dictyostelium discoideum (Social amoeba).